Consider the following 212-residue polypeptide: MTKGILGRKVGMTQIFTKDGVLVPVTVVEATPNVVMQVKTVESDGYEAVQLGYQDKREVLSNKPEKGHADKAKTSPKRFIREIRGVELKDYEVGSEVTVDTFKEGDVVNVTGTSRGHGYQGNIKRWGQSRGPETHGSRYHRIPGSMGSIINRVPKGKRLPGHMGMKKVTIENLVIEKVVADKNVLMIKGNVPGAKNSLIVVKTASKAVKADK.

The interval Tyr-119–Met-146 is disordered.

The protein belongs to the universal ribosomal protein uL3 family. Part of the 50S ribosomal subunit. Forms a cluster with proteins L14 and L19.

Its function is as follows. One of the primary rRNA binding proteins, it binds directly near the 3'-end of the 23S rRNA, where it nucleates assembly of the 50S subunit. The polypeptide is Large ribosomal subunit protein uL3 (Lactobacillus helveticus (strain DPC 4571)).